Reading from the N-terminus, the 357-residue chain is D-alanine--D-alanine ligase (357 aa).

The 206-residue stretch at 134 to 339 folds into the ATP-grasp domain; the sequence is KQLFEHRGLP…YPDLIAKLID (206 aa). ATP is bound at residue 167–222; it reads NDKLTYPVFVKPANLGSSVGISKCNNEEELKSGIAEAFQFDRKLVIEQGINAREIE. D293, E306, and N308 together coordinate Mg(2+).

It belongs to the D-alanine--D-alanine ligase family. The cofactor is Mg(2+). Requires Mn(2+) as cofactor.

The protein resides in the cytoplasm. It carries out the reaction 2 D-alanine + ATP = D-alanyl-D-alanine + ADP + phosphate + H(+). The protein operates within cell wall biogenesis; peptidoglycan biosynthesis. Its function is as follows. Cell wall formation. This Staphylococcus epidermidis (strain ATCC 35984 / DSM 28319 / BCRC 17069 / CCUG 31568 / BM 3577 / RP62A) protein is D-alanine--D-alanine ligase.